Consider the following 192-residue polypeptide: Ion-translocating oxidoreductase complex subunit A (192 aa).

The next 6 membrane-spanning stretches (helical) occupy residues 5 to 25 (LLLLISTVLVNNFVLVKFLGL), 39 to 59 (IGMSMATTFVLTLASILSYLV), 65 to 85 (LPFDLSYLRTMSFILVIAVVV), 102 to 122 (ALGIYLPLITTNCAVLGVALL), 134 to 154 (AIFGFGAALGFSLVLILFSAM), and 171 to 191 (AIAMITAGLMSLAFMGFTGLV).

It belongs to the NqrDE/RnfAE family. As to quaternary structure, the complex is composed of six subunits: RnfA, RnfB, RnfC, RnfD, RnfE and RnfG.

It is found in the cell inner membrane. In terms of biological role, part of a membrane-bound complex that couples electron transfer with translocation of ions across the membrane. The chain is Ion-translocating oxidoreductase complex subunit A from Shewanella baltica (strain OS223).